The chain runs to 339 residues: Dihydroorotate dehydrogenase (quinone) (339 aa).

FMN-binding positions include 62–66 (AGLDK) and threonine 86. Lysine 66 lines the substrate pocket. Residue 111-115 (NRMGF) participates in substrate binding. 2 residues coordinate FMN: asparagine 139 and asparagine 172. Asparagine 172 lines the substrate pocket. Serine 175 (nucleophile) is an active-site residue. Substrate is bound at residue asparagine 177. 2 residues coordinate FMN: lysine 217 and threonine 245. 246–247 (NT) is a binding site for substrate. FMN is bound by residues glycine 268, glycine 297, and 318-319 (YS).

It belongs to the dihydroorotate dehydrogenase family. Type 2 subfamily. In terms of assembly, monomer. The cofactor is FMN.

It is found in the cell membrane. It catalyses the reaction (S)-dihydroorotate + a quinone = orotate + a quinol. Its pathway is pyrimidine metabolism; UMP biosynthesis via de novo pathway; orotate from (S)-dihydroorotate (quinone route): step 1/1. In terms of biological role, catalyzes the conversion of dihydroorotate to orotate with quinone as electron acceptor. In Shewanella denitrificans (strain OS217 / ATCC BAA-1090 / DSM 15013), this protein is Dihydroorotate dehydrogenase (quinone).